Here is a 179-residue protein sequence, read N- to C-terminus: MIIVTGMPGAGKDEFVKVARSLGFMDLHMGNTVREYASRNGIPDDDKEIGNFAASERKKFGMDIWARRTAEKIESDELTVIDGVRNKEEMDYFSKFSKSIYVVAIFANRKTRLERILKRDRPDDIRSMEGLIERDNRELSWGIGNVIALADYMIVNDESLEIFYERSRKLLFDHFLIRA.

ATP is bound at residue Gly-6–Asp-13.

This sequence belongs to the UPF0200 family.

The chain is UPF0200 protein TV0279 from Thermoplasma volcanium (strain ATCC 51530 / DSM 4299 / JCM 9571 / NBRC 15438 / GSS1).